The following is a 182-amino-acid chain: ADP-ribosylation factor 1 (182 aa).

Residue G2 is the site of N-myristoyl glycine attachment. GTP-binding positions include 24–31 (GLDNAGKT), 67–71 (DLGGQ), and 126–129 (NKQD).

It belongs to the small GTPase superfamily. Arf family.

Its subcellular location is the golgi apparatus. The enzyme catalyses GTP + H2O = GDP + phosphate + H(+). Its function is as follows. GTP-binding protein involved in protein trafficking; may modulate vesicle budding and uncoating within the Golgi apparatus. This chain is ADP-ribosylation factor 1 (ARF1), found in Brassica rapa subsp. pekinensis (Chinese cabbage).